A 134-amino-acid chain; its full sequence is Small ribosomal subunit protein uS8c (134 aa).

Belongs to the universal ribosomal protein uS8 family. In terms of assembly, part of the 30S ribosomal subunit.

It is found in the plastid. The protein resides in the chloroplast. Its function is as follows. One of the primary rRNA binding proteins, it binds directly to 16S rRNA central domain where it helps coordinate assembly of the platform of the 30S subunit. This Aethionema grandiflorum (Persian stone-cress) protein is Small ribosomal subunit protein uS8c (rps8).